The following is a 314-amino-acid chain: tRNA pseudouridine synthase B (314 aa).

Position 43 (His-43) interacts with substrate. Asp-48 serves as the catalytic Nucleophile. Substrate-binding residues include Tyr-76, Tyr-179, and Leu-200.

Belongs to the pseudouridine synthase TruB family. Type 1 subfamily.

The enzyme catalyses uridine(55) in tRNA = pseudouridine(55) in tRNA. In terms of biological role, responsible for synthesis of pseudouridine from uracil-55 in the psi GC loop of transfer RNAs. This Serratia proteamaculans (strain 568) protein is tRNA pseudouridine synthase B.